Here is a 529-residue protein sequence, read N- to C-terminus: Probable cytochrome P450 6t1 (529 aa).

A heme-binding site is contributed by C472.

This sequence belongs to the cytochrome P450 family. The cofactor is heme.

The protein resides in the endoplasmic reticulum membrane. It localises to the microsome membrane. Its function is as follows. May be involved in the metabolism of insect hormones and in the breakdown of synthetic insecticides. This is Probable cytochrome P450 6t1 (Cyp6t1) from Drosophila melanogaster (Fruit fly).